The chain runs to 133 residues: Small ribosomal subunit protein uS8 (133 aa).

It belongs to the universal ribosomal protein uS8 family. Part of the 30S ribosomal subunit. Contacts proteins S5 and S12.

Functionally, one of the primary rRNA binding proteins, it binds directly to 16S rRNA central domain where it helps coordinate assembly of the platform of the 30S subunit. This is Small ribosomal subunit protein uS8 from Parasynechococcus marenigrum (strain WH8102).